Reading from the N-terminus, the 558-residue chain is Chaperonin GroEL 1 (558 aa).

Residues 29–32 (TLGP), 86–90 (DGTTT), G413, and D494 each bind ATP.

The protein belongs to the chaperonin (HSP60) family. In terms of assembly, forms a cylinder of 14 subunits composed of two heptameric rings stacked back-to-back. Interacts with the co-chaperonin GroES.

It localises to the cytoplasm. It catalyses the reaction ATP + H2O + a folded polypeptide = ADP + phosphate + an unfolded polypeptide.. Functionally, together with its co-chaperonin GroES, plays an essential role in assisting protein folding. The GroEL-GroES system forms a nano-cage that allows encapsulation of the non-native substrate proteins and provides a physical environment optimized to promote and accelerate protein folding. The protein is Chaperonin GroEL 1 of Acaryochloris marina (strain MBIC 11017).